The following is a 103-amino-acid chain: Large ribosomal subunit protein uL24 (103 aa).

It belongs to the universal ribosomal protein uL24 family. In terms of assembly, part of the 50S ribosomal subunit.

Functionally, one of two assembly initiator proteins, it binds directly to the 5'-end of the 23S rRNA, where it nucleates assembly of the 50S subunit. In terms of biological role, one of the proteins that surrounds the polypeptide exit tunnel on the outside of the subunit. The polypeptide is Large ribosomal subunit protein uL24 (Synechococcus sp. (strain CC9311)).